A 1009-amino-acid chain; its full sequence is Membrane alanyl aminopeptidase (1009 aa).

Residues 1–15 form the signal peptide; it reads MAAIKLLVLSLACAC. Residues 16-52 constitute a propeptide, activation peptide; sequence VIAHSPIPPASRTIFLDERLEGGAFENIDAFENIELS. Residue 338-342 participates in substrate binding; it reads GAMEN. His-374 is a binding site for Zn(2+). Glu-375 (proton acceptor) is an active-site residue. Zn(2+)-binding residues include His-378 and Glu-397. N-linked (GlcNAc...) asparagine glycosylation is present at Asn-906. Residues 955 to 980 are disordered; it reads PSTSTTSTTAAPTTVTQPTITEPSTP. Residue Asp-987 is the site of GPI-anchor amidated aspartate attachment. Residues 988–1009 constitute a propeptide, removed in mature form; sequence SAMTSFASLFIISLGAILHLIL.

Belongs to the peptidase M1 family. The cofactor is Zn(2+).

It localises to the cell membrane. Functionally, binds to the B.thuringiensis toxin, CryIA(C). This is Membrane alanyl aminopeptidase from Heliothis virescens (Tobacco budworm moth).